The following is a 236-amino-acid chain: Uridylate kinase (236 aa).

ATP is bound at residue 12-15 (KLSG). Residues 20–25 (GEKGFG) are involved in allosteric activation by GTP. Glycine 54 contacts UMP. ATP contacts are provided by glycine 55 and arginine 59. UMP contacts are provided by residues aspartate 72 and 133–140 (TGNPYFST). 3 residues coordinate ATP: asparagine 161, tyrosine 166, and aspartate 169.

Belongs to the UMP kinase family. In terms of assembly, homohexamer.

Its subcellular location is the cytoplasm. It carries out the reaction UMP + ATP = UDP + ADP. It participates in pyrimidine metabolism; CTP biosynthesis via de novo pathway; UDP from UMP (UMPK route): step 1/1. With respect to regulation, allosterically activated by GTP. Inhibited by UTP. In terms of biological role, catalyzes the reversible phosphorylation of UMP to UDP. The polypeptide is Uridylate kinase (Alkaliphilus metalliredigens (strain QYMF)).